A 149-amino-acid chain; its full sequence is D-aminoacyl-tRNA deacylase (149 aa).

The short motif at 137–138 (GP) is the Gly-cisPro motif, important for rejection of L-amino acids element.

It belongs to the DTD family. Homodimer.

The protein localises to the cytoplasm. The catalysed reaction is glycyl-tRNA(Ala) + H2O = tRNA(Ala) + glycine + H(+). The enzyme catalyses a D-aminoacyl-tRNA + H2O = a tRNA + a D-alpha-amino acid + H(+). Its function is as follows. An aminoacyl-tRNA editing enzyme that deacylates mischarged D-aminoacyl-tRNAs. Also deacylates mischarged glycyl-tRNA(Ala), protecting cells against glycine mischarging by AlaRS. Acts via tRNA-based rather than protein-based catalysis; rejects L-amino acids rather than detecting D-amino acids in the active site. By recycling D-aminoacyl-tRNA to D-amino acids and free tRNA molecules, this enzyme counteracts the toxicity associated with the formation of D-aminoacyl-tRNA entities in vivo and helps enforce protein L-homochirality. This Thioalkalivibrio sulfidiphilus (strain HL-EbGR7) protein is D-aminoacyl-tRNA deacylase.